We begin with the raw amino-acid sequence, 330 residues long: Aspartate--ammonia ligase (330 aa).

Belongs to the class-II aminoacyl-tRNA synthetase family. AsnA subfamily.

Its subcellular location is the cytoplasm. It catalyses the reaction L-aspartate + NH4(+) + ATP = L-asparagine + AMP + diphosphate + H(+). The protein operates within amino-acid biosynthesis; L-asparagine biosynthesis; L-asparagine from L-aspartate (ammonia route): step 1/1. The chain is Aspartate--ammonia ligase from Streptococcus thermophilus (strain ATCC BAA-250 / LMG 18311).